The primary structure comprises 310 residues: tRNA dimethylallyltransferase (310 aa).

Residue 15-22 (GATASGKT) participates in ATP binding. 17–22 (TASGKT) is a binding site for substrate.

This sequence belongs to the IPP transferase family. In terms of assembly, monomer. Mg(2+) serves as cofactor.

It carries out the reaction adenosine(37) in tRNA + dimethylallyl diphosphate = N(6)-dimethylallyladenosine(37) in tRNA + diphosphate. Its function is as follows. Catalyzes the transfer of a dimethylallyl group onto the adenine at position 37 in tRNAs that read codons beginning with uridine, leading to the formation of N6-(dimethylallyl)adenosine (i(6)A). This Nocardioides sp. (strain ATCC BAA-499 / JS614) protein is tRNA dimethylallyltransferase.